A 489-amino-acid chain; its full sequence is Poly(A) RNA polymerase GLD2 (489 aa).

Residues 93–118 are disordered; the sequence is RQRFSCPSPHNQSARNSNFTSQPVTR. The segment covering 100-116 has biased composition (polar residues); it reads SPHNQSARNSNFTSQPV. Asp219 and Asp221 together coordinate Mg(2+). Residues 386–440 form the PAP-associated domain; sequence SLGDLFLGFLRYYATVFKWDKQVISVRMARTLPKSNCKEWKDKFICVEEPFNRTN.

Belongs to the DNA polymerase type-B-like family. GLD2 subfamily. Mg(2+) serves as cofactor. It depends on Mn(2+) as a cofactor.

The protein localises to the cytoplasm. The enzyme catalyses RNA(n) + ATP = RNA(n)-3'-adenine ribonucleotide + diphosphate. Functionally, cytoplasmic poly(A) RNA polymerase that adds successive AMP monomers to the 3'-end of specific RNAs, forming a poly(A) tail. In contrast to the canonical nuclear poly(A) RNA polymerase, it only adds poly(A) to selected cytoplasmic mRNAs. May not play a role in replication-dependent histone mRNA degradation. In Danio rerio (Zebrafish), this protein is Poly(A) RNA polymerase GLD2.